Reading from the N-terminus, the 139-residue chain is Putative nickel-responsive regulator (139 aa).

Ni(2+)-binding residues include His79, His90, His92, and Cys98.

It belongs to the transcriptional regulatory CopG/NikR family. It depends on Ni(2+) as a cofactor.

Functionally, transcriptional regulator. This Nitratidesulfovibrio vulgaris (strain ATCC 29579 / DSM 644 / CCUG 34227 / NCIMB 8303 / VKM B-1760 / Hildenborough) (Desulfovibrio vulgaris) protein is Putative nickel-responsive regulator.